Here is a 176-residue protein sequence, read N- to C-terminus: UPF0098 protein Rv2140c (176 aa).

Threonine 2 carries the post-translational modification N-acetylthreonine.

The protein belongs to the UPF0098 family.

In Mycobacterium tuberculosis (strain ATCC 25618 / H37Rv), this protein is UPF0098 protein Rv2140c.